We begin with the raw amino-acid sequence, 273 residues long: Type II pantothenate kinase (273 aa).

Position 8-15 (8-15 (DAGGTLTK)) interacts with ATP. Glutamate 76 functions as the Proton acceptor in the catalytic mechanism. ATP contacts are provided by residues threonine 105, 127–131 (GGTIM), phenylalanine 143, and serine 230.

Belongs to the type II pantothenate kinase family. In terms of assembly, homodimer.

It localises to the cytoplasm. It catalyses the reaction (R)-pantothenate + ATP = (R)-4'-phosphopantothenate + ADP + H(+). Its pathway is cofactor biosynthesis; coenzyme A biosynthesis; CoA from (R)-pantothenate: step 1/5. In terms of biological role, catalyzes the phosphorylation of pantothenate (Pan), the first step in CoA biosynthesis. This is Type II pantothenate kinase from Bacillus cereus (strain G9842).